A 215-amino-acid polypeptide reads, in one-letter code: Ribose-5-phosphate isomerase A (215 aa).

Residues 26–29, 79–82, and 92–95 contribute to the substrate site; these read TGST, DGAD, and KGGG. Catalysis depends on Glu101, which acts as the Proton acceptor. Lys119 is a binding site for substrate.

It belongs to the ribose 5-phosphate isomerase family. As to quaternary structure, homodimer.

The enzyme catalyses aldehydo-D-ribose 5-phosphate = D-ribulose 5-phosphate. It functions in the pathway carbohydrate degradation; pentose phosphate pathway; D-ribose 5-phosphate from D-ribulose 5-phosphate (non-oxidative stage): step 1/1. Catalyzes the reversible conversion of ribose-5-phosphate to ribulose 5-phosphate. The sequence is that of Ribose-5-phosphate isomerase A from Xylella fastidiosa (strain M12).